Consider the following 405-residue polypeptide: Scarecrow-like protein 23 (405 aa).

The disordered stretch occupies residues 1–20 (MTTKRIDRDLPSSDDPSSAK). The region spanning 31–400 (ENDGAAAIKL…LSLLTASAWK (370 aa)) is the GRAS domain. Positions 38-102 (IKLLSLLLQC…ISSYLSGACS (65 aa)) are leucine repeat I (LRI). Residues 45-49 (LQCAE) carry the LxCxE motif motif. Positions 121–186 (LQTYNSVSPL…RKLRSIRITG (66 aa)) are VHIID. Residues 152–156 (VHIID) carry the VHIID motif. The interval 196-228 (STGRRLADFASSLNLPFEFHPIEGIIGNLIDPS) is leucine repeat II (LRII). Residues 238–327 (VVVHWMQHRL…QIVLGTEIRN (90 aa)) form a PFYRE region. The interval 330–400 (AHGGGRRKRM…LSLLTASAWK (71 aa)) is SAW.

Belongs to the GRAS family. In terms of assembly, interacts with SHR. Expressed in seedlings, cotyledons, shoot apex, leaves and flowers.

Its subcellular location is the nucleus. Probable transcription factor involved in plant development. This is Scarecrow-like protein 23 (SCL23) from Arabidopsis thaliana (Mouse-ear cress).